The primary structure comprises 259 residues: MDSLHIGSYTFSSRLILGTGKFSSPGVMLEAVKASGAQLVTVALRRFNREQPGDDLFTPLTSIPGITLMPNTSGASTAAEAVQAARIARELSGSPFIKVEIHPNPQHLMPDPIETYEASKILAKEGFLVMPYIPADPVLAKRLEEAGCVSVMPLGSAIGSGQGLATAEMLKIIIRESTIPVIVDAGLRSPSEAALAMEMGCDAVLVNSAVAVAGNPPVMAEAFAEAVAAGRKAFTAGIMEKSGMAVATSPLTSFLGTEA.

Lysine 98 (schiff-base intermediate with DXP) is an active-site residue. Residues glycine 159, 185-186 (AG), and 207-208 (NS) contribute to the 1-deoxy-D-xylulose 5-phosphate site.

It belongs to the ThiG family. Homotetramer. Forms heterodimers with either ThiH or ThiS.

The protein localises to the cytoplasm. It catalyses the reaction [ThiS sulfur-carrier protein]-C-terminal-Gly-aminoethanethioate + 2-iminoacetate + 1-deoxy-D-xylulose 5-phosphate = [ThiS sulfur-carrier protein]-C-terminal Gly-Gly + 2-[(2R,5Z)-2-carboxy-4-methylthiazol-5(2H)-ylidene]ethyl phosphate + 2 H2O + H(+). Its pathway is cofactor biosynthesis; thiamine diphosphate biosynthesis. Its function is as follows. Catalyzes the rearrangement of 1-deoxy-D-xylulose 5-phosphate (DXP) to produce the thiazole phosphate moiety of thiamine. Sulfur is provided by the thiocarboxylate moiety of the carrier protein ThiS. In vitro, sulfur can be provided by H(2)S. The polypeptide is Thiazole synthase (Chlorobium limicola (strain DSM 245 / NBRC 103803 / 6330)).